The chain runs to 859 residues: Heat shock protein 105 kDa (859 aa).

Ser-2 carries the N-acetylserine modification. At Lys-471 the chain carries N6-acetyllysine. Ser-509 and Ser-510 each carry phosphoserine. 2 disordered regions span residues 515–585 (MDCQ…PPEA) and 797–859 (CEPV…MDLD). A compositionally biased stretch (polar residues) spans 533–555 (QQDNNEAGTQPQVQTDGHQTSQS). Residue Ser-558 is modified to Phosphoserine. Thr-562 is subject to Phosphothreonine. 2 stretches are compositionally biased toward basic and acidic residues: residues 564–585 (EENK…PPEA) and 806–815 (PKIESPKLER). A Phosphoserine modification is found at Ser-810. The residue at position 816 (Thr-816) is a Phosphothreonine. A compositionally biased stretch (basic and acidic residues) spans 822–831 (TDKKEEDLDG). Residues 850–859 (EKSSINMDLD) show a composition bias toward polar residues.

This sequence belongs to the heat shock protein 70 family. As to quaternary structure, interacts with HSPA8/HSC70. Interacts with HSPA1A (via NBD) and HSPA1B (via NBD). In terms of processing, phosphorylation on Ser-509 may be important for regulation of the HSPA8/HSC70 chaperone activity.

It is found in the cytoplasm. Its function is as follows. Acts as a nucleotide-exchange factor (NEF) for chaperone proteins HSPA1A and HSPA1B, promoting the release of ADP from HSPA1A/B thereby triggering substrate release. Prevents the aggregation of denatured proteins in cells under severe stress, on which the ATP levels decrease markedly. Inhibits HSPA8/HSC70 ATPase and chaperone activities. This chain is Heat shock protein 105 kDa (HSPH1), found in Bos taurus (Bovine).